A 780-amino-acid polypeptide reads, in one-letter code: Dynamin-related protein 3B (780 aa).

Serine 2 carries the post-translational modification N-acetylserine. Residues 40 to 315 (TIALPQVAVV…LVQHIKALLP (276 aa)) enclose the Dynamin-type G domain. Positions 50 to 57 (GSQSSGKS) are G1 motif. 50–57 (GSQSSGKS) contacts GTP. Residues 76–78 (CTR) form a G2 motif region. Positions 157-160 (DLPG) are G3 motif. GTP contacts are provided by residues 157 to 161 (DLPGI) and 226 to 229 (TKLD). Residues 226–229 (TKLD) form a G4 motif region. The G5 motif stretch occupies residues 256 to 259 (VNRS). Disordered stretches follow at residues 536–558 (PVAR…QIKT) and 573–592 (QAVP…STSW). Basic and acidic residues predominate over residues 539–548 (RPRDTVEPER). Residues 549–558 (TASSGSQIKT) show a composition bias toward polar residues. The GED domain maps to 654–745 (IEITKLLLKS…TLDELPLEAE (92 aa)). Over residues 753–770 (IGSEAKHEELPGTRRSRT) the composition is skewed to basic and acidic residues. Residues 753–780 (IGSEAKHEELPGTRRSRTETNGNGRLHM) form a disordered region. Residues 771 to 780 (ETNGNGRLHM) are compositionally biased toward polar residues.

It belongs to the TRAFAC class dynamin-like GTPase superfamily. Dynamin/Fzo/YdjA family. In terms of assembly, interacts with ARC5 on peroxisomes and ELM1 on mitochondria.

The protein resides in the mitochondrion. Its subcellular location is the peroxisome. Involved in the control of mitochondrial and peroxisomal division and morphology. This is Dynamin-related protein 3B (DRP3B) from Arabidopsis thaliana (Mouse-ear cress).